Here is a 159-residue protein sequence, read N- to C-terminus: Phosphopantetheine adenylyltransferase (159 aa).

Threonine 10 is a binding site for substrate. ATP contacts are provided by residues 10 to 11 (TF) and histidine 18. Residues lysine 42, methionine 74, and arginine 88 each contribute to the substrate site. Residues 89-91 (GLR), glutamate 99, and 124-130 (WSFISSS) contribute to the ATP site.

It belongs to the bacterial CoaD family. In terms of assembly, homohexamer. Mg(2+) serves as cofactor.

The protein resides in the cytoplasm. The enzyme catalyses (R)-4'-phosphopantetheine + ATP + H(+) = 3'-dephospho-CoA + diphosphate. Its pathway is cofactor biosynthesis; coenzyme A biosynthesis; CoA from (R)-pantothenate: step 4/5. Functionally, reversibly transfers an adenylyl group from ATP to 4'-phosphopantetheine, yielding dephospho-CoA (dPCoA) and pyrophosphate. This chain is Phosphopantetheine adenylyltransferase, found in Klebsiella pneumoniae subsp. pneumoniae (strain ATCC 700721 / MGH 78578).